The chain runs to 362 residues: Cell death regulator Aven (362 aa).

Disordered regions lie at residues 1-111 (MQAE…NYSK), 214-237 (VKPKRTDDGKGLGMQLKGPLGPGG), and 253-362 (VLLG…SMIS). Positions 8–17 (RGGRGRRPGR) are enriched in basic residues. The segment covering 37–47 (RGGGGGGGGDG) has biased composition (gly residues). A compositionally biased stretch (basic residues) spans 50–60 (RRGRGRGRGFR). Gly residues predominate over residues 61–72 (GARGGRGGGGAP). Residues 90 to 105 (VEDDSDAETYGEENDE) are compositionally biased toward acidic residues. The residue at position 94 (serine 94) is a Phosphoserine. N6-methyllysine is present on lysine 230. A compositionally biased stretch (acidic residues) spans 350 to 362 (EEELEDWLDSMIS).

Binds Apaf-1, BCL-2 and BAD (Bcl-xl). In terms of tissue distribution, highly expressed in testis, ovary, thymus, prostate, spleen, small intestine, colon, heart, skeletal muscle, liver, kidney and pancreas.

The protein localises to the endomembrane system. In terms of biological role, protects against apoptosis mediated by Apaf-1. This is Cell death regulator Aven (AVEN) from Homo sapiens (Human).